Consider the following 743-residue polypeptide: MSQEKNEMFESEWSKEREREKQLASGLDTAEKALKAESEELQKSKSELICLYNEVHNLPGASESRDHFLIACDLLRRENSELETKVLKLSQEFAQLNHFTLRGKTAPSNLITSENICKDPESNEPVLEIEIQSPKEEREELCPKLGERKQKEIPEESVKEGSFPREGQKEEGSQQNQDMKDEEKEQRLTMKPEEVVRLREELSRINQSLLQSQSSGDSSDDSGAQYPSSGDKLKYNQQGEVQQLHQNLHRLQILCNSAENELRYERGKNLDLKQHNSLLQEENIKIKIELKHAQQKLLESTKMCSSLTAECKQSQQKIKELELEVLKQTQSIKSQNNLQEKLAQEKSKVADAEEKILDLQRKLEHAHKVCLTDTCISEKQQLEEKIKEATENEAKVKQQYQEEQQKRKLLYQNTDELHRQVRTLQDKENLLEMTCSQQQSRIQQQEALLKQLENEKRKYDEDVKSNQELSEKLSKLQQEKEALREEYLRLLKLLNVHVRNYNEKHQQHKIKLQKVKYRLTNEVELRDKRINEFEDEIGILQHKIEKKAIQDQITAQNDTLLLEKRKLQEQVIEQEQLIHSNKWTISSIQSRVLYMDKENKQLQEISLRLPATKKQKEIYSTEVCTCNNAELQHEDESVPKATEKWKHSEQMETTISDILESEVVNEILPLSNSSFSGKGLVESFVSLQETDDIKSKEAMASSKSPEKSPENLVCSQNSEAGYINVTSLKETHGIQEQDQKSEL.

Basic and acidic residues-rich tracts occupy residues 1–22 (MSQE…REKQ) and 133–193 (SPKE…MKPE). Disordered stretches follow at residues 1–25 (MSQE…QLAS), 114–193 (ENIC…MKPE), 208–233 (SLLQ…GDKL), and 695–715 (SKEA…LVCS). 2 coiled-coil regions span residues 21–98 (KQLA…QLNH) and 165–580 (REGQ…LIHS). Low complexity predominate over residues 208–223 (SLLQSQSSGDSSDDSG).

It belongs to the prefoldin subunit beta family.

The chain is Coiled-coil domain-containing protein 30 (CCDC30) from Macaca fascicularis (Crab-eating macaque).